The sequence spans 216 residues: Kynurenine formamidase (216 aa).

Residue F21 participates in substrate binding. Residues H51, H55, and D57 each contribute to the Zn(2+) site. The Proton donor/acceptor role is filled by H61. H167 and E179 together coordinate Zn(2+).

The protein belongs to the Cyclase 1 superfamily. KynB family. Homodimer. The cofactor is Zn(2+).

It catalyses the reaction N-formyl-L-kynurenine + H2O = L-kynurenine + formate + H(+). It participates in amino-acid degradation; L-tryptophan degradation via kynurenine pathway; L-kynurenine from L-tryptophan: step 2/2. Its function is as follows. Catalyzes the hydrolysis of N-formyl-L-kynurenine to L-kynurenine, the second step in the kynurenine pathway of tryptophan degradation. The sequence is that of Kynurenine formamidase from Paracidovorax citrulli (strain AAC00-1) (Acidovorax citrulli).